A 198-amino-acid polypeptide reads, in one-letter code: Fucoxanthin-chlorophyll a-c binding protein B, chloroplastic (198 aa).

Residues 1–31 (MKFTVFASLFASAAAFAPAQQAARTSVATNM) constitute a chloroplast transit peptide. 3 helical membrane-spanning segments follow: residues 73–94 (ISMLAVAGYLAQEAGWRLGGDI), 114–134 (IPQAGLIQIIAFIGFLETSVM), and 174–196 (GRAAQMGILALMVHEQLGVNILP).

This sequence belongs to the fucoxanthin chlorophyll protein family. As to quaternary structure, the LHC complex of chromophytic algae is composed of fucoxanthin, chlorophyll A and C bound non-covalently by fucoxanthin chlorophyll proteins (FCPs). The ratio of the pigments in LHC; fucoxanthin: chlorophyll C: chlorophyll A; (0.6-1): (0.1-0.3): (1).

The protein localises to the plastid. It localises to the chloroplast thylakoid membrane. Its function is as follows. The light-harvesting complex (LHC) functions as a light receptor, it captures and delivers excitation energy to photosystems with which it is closely associated. Energy is transferred from the carotenoid and chlorophyll C (or B) to chlorophyll A and the photosynthetic reaction centers where it is used to synthesize ATP and reducing power. The chain is Fucoxanthin-chlorophyll a-c binding protein B, chloroplastic (FCPB) from Phaeodactylum tricornutum (Diatom).